The following is a 1161-amino-acid chain: Cingulin (1161 aa).

Positions 1-403 (MSSLSADRKP…SLIHERFCGV (403 aa)) are head. Disordered regions lie at residues 29–53 (GGFP…SPSK), 79–309 (SYGV…LGRD), 649–678 (QSEL…KRET), 699–721 (SKAI…ESNL), 739–773 (RLHS…AASR), and 1123–1161 (QSRR…TTSC). A ZIM motif is present at residues 51–65 (PSKYGVAVRVQGISG). 2 stretches are compositionally biased toward polar residues: residues 84-104 (LKTQ…SPYN) and 117-129 (PQGS…QPSS). Over residues 189-203 (NGIGSSLNGTGLNGS) the composition is skewed to low complexity. Polar residues predominate over residues 273-305 (EASSTSPTINPYAPNTSATVPKLNSTKPSSTGS). A coiled-coil region spans residues 413-1128 (SNMKTELEQA…RKIQQSRRST (716 aa)). Over residues 742–751 (SSVPDSSSSD) the composition is skewed to low complexity. Basic and acidic residues predominate over residues 755 to 773 (EENRSLKTQLEESRRAASR). Positions 1122–1161 (QQSRRSTLGSTLSSDEEDNYSDTKSITSILTDSPLQTTSC) are tail. Residues 1124-1134 (SRRSTLGSTLS) show a composition bias toward low complexity. Polar residues predominate over residues 1143–1161 (DTKSITSILTDSPLQTTSC).

Belongs to the cingulin family. In terms of assembly, homodimer.

The protein localises to the cell junction. It is found in the tight junction. In terms of biological role, probably plays a role in the formation and regulation of the tight junction (TJ) paracellular permeability barrier. Note=Localizes to the apical junction complex composed of tight and adherens junctions. The polypeptide is Cingulin (Danio rerio (Zebrafish)).